A 560-amino-acid chain; its full sequence is Membrane protein insertase YidC (560 aa).

6 helical membrane passes run Ile5–Phe25, Ala334–Phe354, Tyr357–Phe377, Leu431–Ile451, Leu476–Leu496, and Phe522–Trp542.

This sequence belongs to the OXA1/ALB3/YidC family. Type 1 subfamily. As to quaternary structure, interacts with the Sec translocase complex via SecD. Specifically interacts with transmembrane segments of nascent integral membrane proteins during membrane integration.

Its subcellular location is the cell inner membrane. Functionally, required for the insertion and/or proper folding and/or complex formation of integral membrane proteins into the membrane. Involved in integration of membrane proteins that insert both dependently and independently of the Sec translocase complex, as well as at least some lipoproteins. Aids folding of multispanning membrane proteins. This Rickettsia rickettsii (strain Sheila Smith) protein is Membrane protein insertase YidC.